A 434-amino-acid polypeptide reads, in one-letter code: Nicotinate phosphoribosyltransferase (434 aa).

At His-242 the chain carries Phosphohistidine; by autocatalysis.

This sequence belongs to the NAPRTase family. Transiently phosphorylated on a His residue during the reaction cycle. Phosphorylation strongly increases the affinity for substrates and increases the rate of nicotinate D-ribonucleotide production. Dephosphorylation regenerates the low-affinity form of the enzyme, leading to product release.

It carries out the reaction nicotinate + 5-phospho-alpha-D-ribose 1-diphosphate + ATP + H2O = nicotinate beta-D-ribonucleotide + ADP + phosphate + diphosphate. It participates in cofactor biosynthesis; NAD(+) biosynthesis; nicotinate D-ribonucleotide from nicotinate: step 1/1. Functionally, catalyzes the synthesis of beta-nicotinate D-ribonucleotide from nicotinate and 5-phospho-D-ribose 1-phosphate at the expense of ATP. This Rhizobium etli (strain ATCC 51251 / DSM 11541 / JCM 21823 / NBRC 15573 / CFN 42) protein is Nicotinate phosphoribosyltransferase.